Here is a 311-residue protein sequence, read N- to C-terminus: Aquaporin-1 (311 aa).

Residues 1 to 16 lie on the Cytoplasmic side of the membrane; the sequence is MHPQVASLFDNVYEDL. The helical transmembrane segment at 17–37 threads the bilayer; the sequence is AAATLEFIGTAFFLLFGLGGI. Residues 38–56 lie on the Extracellular side of the membrane; the sequence is QASTAEDTASSQPPASGIE. A helical membrane pass occupies residues 57–77; the sequence is HVLYISTCMGFSLVVSAWLFF. Residue arginine 78 is a topological domain, cytoplasmic. The chain crosses the membrane as a helical span at residues 79 to 99; that stretch reads VTGGLFNPNISFALLLVGGLK. Residues 85–87 carry the NPA 1 motif; sequence NPN. A topological domain (extracellular) is located at residue proline 100. A helical membrane pass occupies residues 101 to 121; that stretch reads LRFVLFCIAQLTGAIAGAAIV. At 122 to 143 the chain is on the cytoplasmic side; the sequence is RGLTSAPLSVNNVLQQGTSAAQ. The chain crosses the membrane as a helical span at residues 144–164; the sequence is GVFIEMFITAALVLSVLMLAA. Over 165-168 the chain is Extracellular; sequence EKHE. The chain crosses the membrane as a helical span at residues 169–189; it reads ATPFAPVGIGLTLFACHLFAV. Residues 190–215 lie on the Cytoplasmic side of the membrane; sequence YYTGAAMNSARAFGPAVISGFPEPQH. An NPA 2 motif is present at residues 197–199; it reads NSA. Residues 216-236 traverse the membrane as a helical segment; the sequence is WVYWVGPFLGSLLGAGFYATL. The Extracellular segment spans residues 237-311; sequence KHYKYWRLNP…TSSRTNFSPV (75 aa). Residues 276–311 are disordered; that stretch reads DEETRNGCASNEEGVRATGDEKSSNATSSRTNFSPV. Residues 288–298 are compositionally biased toward basic and acidic residues; the sequence is EGVRATGDEKS. A compositionally biased stretch (polar residues) spans 299-311; it reads SNATSSRTNFSPV. N-linked (GlcNAc...) asparagine glycosylation is present at asparagine 300.

This sequence belongs to the MIP/aquaporin (TC 1.A.8) family.

It localises to the cell membrane. The enzyme catalyses H2O(in) = H2O(out). The catalysed reaction is H2O2(out) = H2O2(in). It catalyses the reaction nitric oxide(out) = nitric oxide(in). It carries out the reaction CO2(out) = CO2(in). In terms of biological role, water channel required to facilitate the transport of water across membranes. Also mediates the transport nitric oxide, hydrogen peroxide and carbon dioxide across the membrane. Required for Hartig net development in trembling aspen trees. Contributes in fungal cellular processes during the basidiocarp formation. This chain is Aquaporin-1, found in Laccaria bicolor (Bicoloured deceiver).